Reading from the N-terminus, the 616-residue chain is Glutamine--fructose-6-phosphate aminotransferase [isomerizing] (616 aa).

The active-site Nucleophile; for GATase activity is Cys-2. The Glutamine amidotransferase type-2 domain maps to Cys-2–Asp-222. The segment at Thr-70–His-89 is disordered. 2 SIS domains span residues Ile-289–Phe-428 and Leu-461–Pro-606. Residue Lys-611 is the For Fru-6P isomerization activity of the active site.

As to quaternary structure, homodimer.

The protein resides in the cytoplasm. It carries out the reaction D-fructose 6-phosphate + L-glutamine = D-glucosamine 6-phosphate + L-glutamate. In terms of biological role, catalyzes the first step in hexosamine metabolism, converting fructose-6P into glucosamine-6P using glutamine as a nitrogen source. The polypeptide is Glutamine--fructose-6-phosphate aminotransferase [isomerizing] (Tropheryma whipplei (strain Twist) (Whipple's bacillus)).